The primary structure comprises 522 residues: Glutamate--cysteine ligase (522 aa).

It belongs to the glutamate--cysteine ligase type 1 family. Type 1 subfamily.

It carries out the reaction L-cysteine + L-glutamate + ATP = gamma-L-glutamyl-L-cysteine + ADP + phosphate + H(+). The protein operates within sulfur metabolism; glutathione biosynthesis; glutathione from L-cysteine and L-glutamate: step 1/2. The polypeptide is Glutamate--cysteine ligase (Shewanella halifaxensis (strain HAW-EB4)).